We begin with the raw amino-acid sequence, 163 residues long: Large ribosomal subunit protein mL59 (163 aa).

The segment at 33 to 53 (PAGADPETHKTPYQEESPNPF) is disordered.

It belongs to the mitochondrion-specific ribosomal protein mL59 family. As to quaternary structure, component of the mitochondrial large ribosomal subunit (mt-LSU). Mature N.crassa 74S mitochondrial ribosomes consist of a small (37S) and a large (54S) subunit. The 37S small subunit contains a 16S ribosomal RNA (16S mt-rRNA) and 32 different proteins. The 54S large subunit contains a 23S rRNA (23S mt-rRNA) and 42 different proteins.

It localises to the mitochondrion. Functionally, component of the mitochondrial ribosome (mitoribosome), a dedicated translation machinery responsible for the synthesis of mitochondrial genome-encoded proteins, including at least some of the essential transmembrane subunits of the mitochondrial respiratory chain. The mitoribosomes are attached to the mitochondrial inner membrane and translation products are cotranslationally integrated into the membrane. In Neurospora crassa (strain ATCC 24698 / 74-OR23-1A / CBS 708.71 / DSM 1257 / FGSC 987), this protein is Large ribosomal subunit protein mL59 (mrpl25).